The sequence spans 565 residues: Arginine--tRNA ligase (565 aa).

The 'HIGH' region signature appears at 120 to 130 (PNIAKPFHVGH).

It belongs to the class-I aminoacyl-tRNA synthetase family. As to quaternary structure, monomer.

It localises to the cytoplasm. It carries out the reaction tRNA(Arg) + L-arginine + ATP = L-arginyl-tRNA(Arg) + AMP + diphosphate. This Clostridium perfringens (strain 13 / Type A) protein is Arginine--tRNA ligase.